A 725-amino-acid chain; its full sequence is Palmitoyltransferase AKR1 (725 aa).

Residues 1–303 (MGTIAMASIN…LKDKRSFVTR (303 aa)) are Cytoplasmic-facing. 5 ANK repeats span residues 84–113 (EGIT…EINR), 118–147 (SIAT…DPLV), 151–180 (QGYN…PVDV), 184–213 (FGHT…SVHA), and 217–246 (QGFT…DRFA). Residues 304–324 (FLFFWPFVLVWAMLVAMSSAP) traverse the membrane as a helical segment. The Lumenal segment spans residues 325–326 (VY). A helical transmembrane segment spans residues 327-347 (IGVPLGIAAVYAIQWVAQQVL). Topologically, residues 348–364 (EYAPSDMRHFHKTPWLT) are cytoplasmic. The chain crosses the membrane as a helical span at residues 365–385 (GIFAATLFWTGVNWLTTVLFA). Residues 386–397 (TTLGAPEGKGHG) lie on the Lumenal side of the membrane. Residues 398-418 (ILNFLFALFFGFTVYFYIASM) form a helical membrane-spanning segment. The Cytoplasmic portion of the chain corresponds to 419–495 (RYDPGFVPKM…NCVGINNHRH (77 aa)). One can recognise a DHHC domain in the interval 451–501 (NFCVTCMIQTPLRSKHCRRCQRCVAKHDHHCPWVYNCVGINNHRHFFFYLI). Residue C481 is the S-palmitoyl cysteine intermediate of the active site. The helical transmembrane segment at 496–516 (FFFYLISLTMGIVSYDFLLYY) threads the bilayer. The Lumenal portion of the chain corresponds to 517–547 (YFDTVSKNASETCNVLSPTLCKYINADSYTS). A helical transmembrane segment spans residues 548–568 (ILAIWITMQLLWVTMLLFTQF). Over 569 to 725 (IQVARAMTTY…YEAVGTEDVV (157 aa)) the chain is Cytoplasmic.

This sequence belongs to the DHHC palmitoyltransferase family. AKR/ZDHHC17 subfamily.

It is found in the early endosome membrane. The protein localises to the golgi apparatus membrane. The enzyme catalyses L-cysteinyl-[protein] + hexadecanoyl-CoA = S-hexadecanoyl-L-cysteinyl-[protein] + CoA. Its function is as follows. Palmitoyltransferase specific for casein kinase 1. This Gibberella zeae (strain ATCC MYA-4620 / CBS 123657 / FGSC 9075 / NRRL 31084 / PH-1) (Wheat head blight fungus) protein is Palmitoyltransferase AKR1 (AKR1).